The chain runs to 428 residues: Tubby-like F-box protein 5 (428 aa).

The disordered stretch occupies residues 17 to 65 (IGSMSRRAADGRAGGGRGGSRHSWPVLWSEQQQPPQQQQLQRQEHQQQQ). Low complexity predominate over residues 47-65 (QQQPPQQQQLQRQEHQQQQ). One can recognise an F-box domain in the interval 65 to 117 (QGRWANLPPELLLDVIQRVEASEATWPARRQVVACAAVCRSWREVTKEVVKTL).

This sequence belongs to the TUB family. Ubiquitous.

The protein is Tubby-like F-box protein 5 (TULP5) of Oryza sativa subsp. japonica (Rice).